The sequence spans 1440 residues: ABC transporter G family member 46 (1440 aa).

The interval 1–42 is disordered; it reads MDDDVDAGEIYAVDRQREEGSASAAAFSRSPSTGRVDDDDDD. Residues 21 to 32 show a composition bias toward low complexity; it reads SASAAAFSRSPS. An ABC transporter 1 domain is found at 137-419; the sequence is ANTLHMTTRS…FKSLGFKCLE (283 aa). An ATP-binding site is contributed by 170-177; the sequence is GSPGSGKT. The ABC transmembrane type-2 1 domain maps to 497-710; it reads KILKANIDRE…ALNALAVNEF (214 aa). 7 helical membrane-spanning segments follow: residues 516–536, 561–581, 603–623, 634–654, 659–679, 688–708, and 745–765; these read LYIF…SVFI, AIMF…PVFF, TPIS…VIGF, FLVL…IAAL, VVAS…SGFI, WLIW…LAVN, and IGLG…TICL. The disordered stretch occupies residues 794-829; the sequence is DQEPSSGGRVTNDKRYTEGGNNDEATSSNANHNSSP. Positions 812–829 are enriched in polar residues; sequence GGNNDEATSSNANHNSSP. An ABC transporter 2 domain is found at 843 to 1095; sequence MTFEDIRYSI…ELIKYFESIE (253 aa). 888-895 provides a ligand contact to ATP; that stretch reads GISGAGKT. The region spanning 1168 to 1382 is the ABC transmembrane type-2 2 domain; that stretch reads IQCLACLWKQ…TINGLVTSQF (215 aa). The next 7 helical transmembrane spans lie at 1188–1208, 1219–1236, 1271–1291, 1302–1322, 1332–1352, 1357–1377, and 1410–1430; these read IAVN…MFWG, LLSA…LGVQ, VVVE…IVYS, FFWY…YGMM, MSSI…GFLI, IPIW…INGL, and LWVA…LFGF.

It belongs to the ABC transporter superfamily. ABCG family. PDR (TC 3.A.1.205) subfamily.

It is found in the membrane. Functionally, may be a general defense protein. The chain is ABC transporter G family member 46 from Oryza sativa subsp. japonica (Rice).